The primary structure comprises 1129 residues: Phospholipid-transporting ATPase 11C (1129 aa).

The Cytoplasmic portion of the chain corresponds to 1–83 (MFRRTLNRLC…IIFLVQVTVD (83 aa)). Residues 84 to 104 (TPTSPVTSGLPLFFVITVTAI) form a helical membrane-spanning segment. Residues 105-287 (KQGYEDWLRH…SQKCSAVEKS (183 aa)) lie on the Extracellular side of the membrane. Residues 288-308 (INAFLIVYLFILLTKAAVCTT) traverse the membrane as a helical segment. Residues 309–343 (LKYVWQSSPYNDEPWYNQKTQKERETFQVLKMFTD) lie on the Cytoplasmic side of the membrane. A helical membrane pass occupies residues 344–364 (FLSFMVLFNFIIPVSMYVTVE). The Extracellular segment spans residues 365-876 (MQKFLGSFFI…YVRIAHLVQY (512 aa)). The active-site 4-aspartylphosphate intermediate is aspartate 409. ATP-binding residues include aspartate 409, lysine 410, and threonine 411. Aspartate 409 is a binding site for Mg(2+). Threonine 411 is a binding site for Mg(2+). The residue at position 442 (serine 442) is a Phosphoserine. ATP is bound by residues glutamate 498, phenylalanine 540, lysine 563, and arginine 594. A coiled-coil region spans residues 607–643 (DFERINAQLVEAKMALQDREEKLEKVFDEIETNMNLI). ATP-binding residues include threonine 674, glycine 675, and aspartate 676. Residues 695–726 (TELLELTTKTIEESERKEDRLHELLIEYRKKL) adopt a coiled-coil conformation. ATP contacts are provided by arginine 789 and lysine 795. Position 816 (aspartate 816) interacts with Mg(2+). Residues asparagine 819 and aspartate 820 each coordinate ATP. Aspartate 820 is a Mg(2+) binding site. Residues 877–897 (FFYKNLCFILPQFLYQFFCGF) form a helical membrane-spanning segment. Topologically, residues 898 to 905 (SQQPLYDA) are cytoplasmic. Residues 906–926 (AYLTMYNICFTSLPILAYSLL) form a helical membrane-spanning segment. Residues 927 to 952 (EQHINIDTLTADPRLYMKITGNAMLQ) lie on the Extracellular side of the membrane. The helical transmembrane segment at 953–973 (LGPFLHWTFLAAFEGTVFFFG) threads the bilayer. The Cytoplasmic portion of the chain corresponds to 974 to 988 (TYFLFQTSSLEDNGK). The chain crosses the membrane as a helical span at residues 989-1009 (IYGNWTFGTIVFTVLVFTVTL). Over 1010–1023 (KLALDTRFWTWINH) the chain is Extracellular. Residues 1024-1044 (FVIWGSLAFYVFFSFFWGGII) traverse the membrane as a helical segment. At 1045–1066 (WPFLKQQRMYFVFAQMLCSVST) the chain is on the cytoplasmic side. A helical membrane pass occupies residues 1067 to 1087 (WLAIILLIFISLFPEILLIVV). Over 1088 to 1129 (KNVRRRSARRNLSCRRASDSLSARPSVRPLLLRTFSDESNIL) the chain is Extracellular. 3 positions are modified to phosphoserine: serine 1105, serine 1113, and serine 1123. The Di-leucine motif motif lies at 1113–1118 (SVRPLL).

Belongs to the cation transport ATPase (P-type) (TC 3.A.3) family. Type IV subfamily. As to quaternary structure, component of a P4-ATPase flippase complex which consists of a catalytic alpha subunit ATP11C and an accessory beta subunit TMEM30A. Mg(2+) serves as cofactor. Proteolytically cleaved by CASP3, CASP6 and CASP7. Post-translationally, phosphorylated at Ser-1113 likely by PRKCA; this creates a functional di-leucine motif that is sufficient for endocytosis. In terms of tissue distribution, widely expressed. Expressed in retina, brain, liver and testes (at protein level). Expressed in lung, bone marrow, lymph nodes, prostate, ovary and uterus. Expressed in fetus.

It is found in the cell membrane. The protein resides in the endoplasmic reticulum membrane. The protein localises to the early endosome membrane. It localises to the recycling endosome membrane. The enzyme catalyses ATP + H2O + phospholipidSide 1 = ADP + phosphate + phospholipidSide 2.. The catalysed reaction is a 1,2-diacyl-sn-glycero-3-phospho-L-serine(out) + ATP + H2O = a 1,2-diacyl-sn-glycero-3-phospho-L-serine(in) + ADP + phosphate + H(+). It catalyses the reaction a 1,2-diacyl-sn-glycero-3-phosphoethanolamine(out) + ATP + H2O = a 1,2-diacyl-sn-glycero-3-phosphoethanolamine(in) + ADP + phosphate + H(+). Functionally, catalytic component of a P4-ATPase flippase complex which catalyzes the hydrolysis of ATP coupled to the transport of aminophospholipids, phosphatidylserines (PS) and phosphatidylethanolamines (PE), from the outer to the inner leaflet of the plasma membrane. Major PS-flippase in immune cell subsets. In erythrocyte plasma membrane, it is required to maintain PS in the inner leaflet preventing its exposure on the surface. This asymmetric distribution is critical for the survival of erythrocytes in circulation since externalized PS is a phagocytic signal for erythrocyte clearance by splenic macrophages. Required for B cell differentiation past the pro-B cell stage. Seems to mediate PS flipping in pro-B cells. May be involved in the transport of cholestatic bile acids. The polypeptide is Phospholipid-transporting ATPase 11C (Mus musculus (Mouse)).